The sequence spans 172 residues: 3-hydroxydecanoyl-[acyl-carrier-protein] dehydratase (172 aa).

His71 is an active-site residue.

Belongs to the thioester dehydratase family. FabA subfamily. In terms of assembly, homodimer.

The protein resides in the cytoplasm. It catalyses the reaction a (3R)-hydroxyacyl-[ACP] = a (2E)-enoyl-[ACP] + H2O. The catalysed reaction is (3R)-hydroxydecanoyl-[ACP] = (2E)-decenoyl-[ACP] + H2O. The enzyme catalyses (2E)-decenoyl-[ACP] = (3Z)-decenoyl-[ACP]. Its pathway is lipid metabolism; fatty acid biosynthesis. Its function is as follows. Necessary for the introduction of cis unsaturation into fatty acids. Catalyzes the dehydration of (3R)-3-hydroxydecanoyl-ACP to E-(2)-decenoyl-ACP and then its isomerization to Z-(3)-decenoyl-ACP. Can catalyze the dehydratase reaction for beta-hydroxyacyl-ACPs with saturated chain lengths up to 16:0, being most active on intermediate chain length. This is 3-hydroxydecanoyl-[acyl-carrier-protein] dehydratase from Cronobacter sakazakii (strain ATCC BAA-894) (Enterobacter sakazakii).